The following is a 150-amino-acid chain: Kirola (150 aa).

N-acetylmethionine is present on M1.

The protein belongs to the MLP family. In terms of assembly, monomer. Post-translationally, the N-terminus is blocked.

The polypeptide is Kirola (Actinidia deliciosa (Kiwi)).